The primary structure comprises 404 residues: Propionate kinase (404 aa).

Belongs to the acetokinase family. PduW subfamily.

It localises to the cytoplasm. The enzyme catalyses propanoate + ATP = propanoyl phosphate + ADP. The protein operates within polyol metabolism; 1,2-propanediol degradation. Functionally, works with phosphate acetyltransferase (pta) to capture exogenous propionate and regenerate propionyl-CoA during degradation of 1,2-propanediol (1,2-PD). This Escherichia fergusonii (strain ATCC 35469 / DSM 13698 / CCUG 18766 / IAM 14443 / JCM 21226 / LMG 7866 / NBRC 102419 / NCTC 12128 / CDC 0568-73) protein is Propionate kinase.